The chain runs to 287 residues: Hydroxyethylthiazole kinase (287 aa).

Methionine 50 contributes to the substrate binding site. ATP contacts are provided by arginine 126 and serine 185. Glycine 212 is a binding site for substrate.

This sequence belongs to the Thz kinase family. Mg(2+) serves as cofactor.

The enzyme catalyses 5-(2-hydroxyethyl)-4-methylthiazole + ATP = 4-methyl-5-(2-phosphooxyethyl)-thiazole + ADP + H(+). It functions in the pathway cofactor biosynthesis; thiamine diphosphate biosynthesis; 4-methyl-5-(2-phosphoethyl)-thiazole from 5-(2-hydroxyethyl)-4-methylthiazole: step 1/1. Functionally, catalyzes the phosphorylation of the hydroxyl group of 4-methyl-5-beta-hydroxyethylthiazole (THZ). This chain is Hydroxyethylthiazole kinase, found in Methanobrevibacter smithii (strain ATCC 35061 / DSM 861 / OCM 144 / PS).